Consider the following 156-residue polypeptide: Small ribosomal subunit protein uS7A/uS7B (156 aa).

The protein belongs to the universal ribosomal protein uS7 family. In terms of assembly, part of the 30S ribosomal subunit. Contacts proteins S9 and S11.

One of the primary rRNA binding proteins, it binds directly to 16S rRNA where it nucleates assembly of the head domain of the 30S subunit. Is located at the subunit interface close to the decoding center, probably blocks exit of the E-site tRNA. This Cereibacter sphaeroides (strain ATCC 17029 / ATH 2.4.9) (Rhodobacter sphaeroides) protein is Small ribosomal subunit protein uS7A/uS7B.